The sequence spans 463 residues: uncharacterized protein (463 aa).

Belongs to the mycobacterial PPE family.

This is an uncharacterized protein from Mycobacterium tuberculosis (strain ATCC 25618 / H37Rv).